The primary structure comprises 96 residues: Co-chaperonin GroES (96 aa).

It belongs to the GroES chaperonin family. As to quaternary structure, heptamer of 7 subunits arranged in a ring. Interacts with the chaperonin GroEL.

It is found in the cytoplasm. In terms of biological role, together with the chaperonin GroEL, plays an essential role in assisting protein folding. The GroEL-GroES system forms a nano-cage that allows encapsulation of the non-native substrate proteins and provides a physical environment optimized to promote and accelerate protein folding. GroES binds to the apical surface of the GroEL ring, thereby capping the opening of the GroEL channel. This Halorhodospira halophila (strain DSM 244 / SL1) (Ectothiorhodospira halophila (strain DSM 244 / SL1)) protein is Co-chaperonin GroES.